Reading from the N-terminus, the 181-residue chain is Large ribosomal subunit protein uL10 (181 aa).

This sequence belongs to the universal ribosomal protein uL10 family. As to quaternary structure, part of the ribosomal stalk of the 50S ribosomal subunit. The N-terminus interacts with L11 and the large rRNA to form the base of the stalk. The C-terminus forms an elongated spine to which L12 dimers bind in a sequential fashion forming a multimeric L10(L12)X complex.

Functionally, forms part of the ribosomal stalk, playing a central role in the interaction of the ribosome with GTP-bound translation factors. The protein is Large ribosomal subunit protein uL10 of Chloroflexus aggregans (strain MD-66 / DSM 9485).